The following is a 726-amino-acid chain: MEGERKNNNKRWYFTREQLENSPSRRFGVDPDKELSYRQQAANLLQDMGQRLNVSQLTINTAIVYMHRFYMIQSFTQFPGNSVAPAALFLAAKVEEQPKKLEHVIKVAHTCLHPQESLPDTRSEAYLQQVQDLVILESIILQTLGFELTIDHPHTHVVKCTQLVRASKDLAQTSYFMATNSLHLTTFSLQYTPPVVACVCIHLACKWSNWEIPVSTDGKHWWEYVDATVTLELLDELTHEFLQILEKTPNRLKRIWNWRACEAAKKTKADDRGTDEKTSEQTILNMISQSSSDTTIAGLMSMSTSTTSAVPSLPVSEESSSNLTSVEMLPGKRWLSSQPSFKLEPTQGHRTSENLALTGVDHSLPQDGSNAFISQKQNSKSVPSAKVSLKEYRAKHAEELAAQKRQLENMEANVKSQYAYAAQNLLSHHDSHSSVILKMPIEGSENPERPFLEKADKTALKMRIPVAGGDKAASSKPEEIKMRIKVHAAADKHNSVEDSVTKSREHKEKHKTHPSNHHHHHNHHSHKHSHSQLPVGTGNKRPGDPKHSSQTSNLAHKTYSLSSSFSSSSSTRKRGPSEETGGAVFDHPAKIAKSTKSSSLNFSFPSLPTMGQMPGHSSDTSGLSFSQPSCKTRVPHSKLDKGPTGANGHNTTQTIDYQDTVNMLHSLLSAQGVQPTQPTAFEFVRPYSDYLNPRSGGISSRSGNTDKPRPPPLPSEPPPPLPPLPK.

Ser117 is modified (phosphoserine). Residues Lys253–Asp270 carry the Nuclear localization signal, and interaction with Tat-TAR RNA motif. At Ser340 the chain carries Phosphoserine. Lys342 participates in a covalent cross-link: Glycyl lysine isopeptide (Lys-Gly) (interchain with G-Cter in SUMO2). Residues Val360–Ala385 form a disordered region. Polar residues predominate over residues Gln366–Val382. Residues Ser384 to Leu425 adopt a coiled-coil conformation. Phosphoserine is present on Ser388. At Lys390 the chain carries N6-acetyllysine. Residue Lys415 forms a Glycyl lysine isopeptide (Lys-Gly) (interchain with G-Cter in SUMO2) linkage. Ser416, Ser474, and Ser475 each carry ADP-ribosylserine. Positions Ile480–Gln550 are histidine-rich domain (HRD). Lys481 participates in a covalent cross-link: Glycyl lysine isopeptide (Lys-Gly) (interchain with G-Cter in SUMO2). Lys485 carries the post-translational modification N6-(ADP-ribosyl)lysine. An ADP-ribosylhistidine modification is found at His487. Residues His487–His506 are compositionally biased toward basic and acidic residues. 2 disordered regions span residues His487–Asn650 and Ser688–Lys726. Ser495 and Ser499 each carry phosphoserine. Positions Lys507–His530 are enriched in basic residues. Positions Lys527–Ser570 are required for interaction with ZMYND8. His530 is modified (ADP-ribosylhistidine). ADP-ribosylserine occurs at positions 531, 549, and 552. Residue His556 is modified to ADP-ribosylhistidine. The span at Ser560–Ser570 shows a compositional bias: low complexity. An ADP-ribosylserine modification is found at Ser563. 2 positions are modified to phosphoserine: Ser564 and Ser577. Over residues Ser594–Thr609 the composition is skewed to low complexity. The segment covering Gly615–Cys630 has biased composition (polar residues). An ADP-ribosylserine modification is found at Ser637. A compositionally biased stretch (pro residues) spans Pro710 to Lys726.

It belongs to the cyclin family. Cyclin C subfamily. In terms of assembly, cyclin-T1 is the predominant cyclin that associates with CDK9 to form a heterodimer called P-TEFb. P-TEFb forms a complex with AFF4/AF5Q31. Component of a complex which is at least composed of HTATSF1/Tat-SF1, P-TEFb complex, RNA pol II, SUPT5H, and NCL/nucleolin. Component of the 7SK snRNP complex at least composed of P-TEFb (composed of CDK9 and CCNT1/cyclin-T1), HEXIM1, HEXIM2, BCDIN3, SART3 proteins and 7SK and U6 snRNAs. Interacts (via central region) with ZMYND8 (via N-terminus); the interaction is direct and the association appears to occur between homodimeric ZMYND8 and the activated form of the P-TEFb complex. Interacts with BRD4, targets chromatin binding. Interacts with JMJD6. Interacts with MDFIC. Interacts with HSF1. Interacts with HTATSF1. Interacts with TBX21. (Microbial infection) Interacts with the transactivation region of HIV-1, HIV-2 and SIV Tat. As to quaternary structure, (Microbial infection) Interacts with human herpes virus 1 (HHV-1) transcriptional regulator ICP22. In terms of processing, ADP-ribosylation on serine residues by PARP1 in response to DNA damage disrupts the phase separation activity of CCNT1, thereby preventing activation of CDK9. In terms of tissue distribution, ubiquitously expressed.

It localises to the nucleus. In terms of biological role, regulatory subunit of the cyclin-dependent kinase pair (CDK9/cyclin-T1) complex, also called positive transcription elongation factor B (P-TEFb), which facilitates the transition from abortive to productive elongation by phosphorylating the CTD (C-terminal domain) of the large subunit of RNA polymerase II (RNA Pol II). Required to activate the protein kinase activity of CDK9: acts by mediating formation of liquid-liquid phase separation (LLPS) that enhances binding of P-TEFb to the CTD of RNA Pol II. Functionally, (Microbial infection) In case of HIV or SIV infections, binds to the transactivation domain of the viral nuclear transcriptional activator, Tat, thereby increasing Tat's affinity for the transactivating response RNA element (TAR RNA). Serves as an essential cofactor for Tat, by promoting RNA Pol II activation, allowing transcription of viral genes. The chain is Cyclin-T1 (CCNT1) from Homo sapiens (Human).